We begin with the raw amino-acid sequence, 417 residues long: Solanesyl diphosphate synthase 2, chloroplastic (417 aa).

A chloroplast-targeting transit peptide spans 1–60 (MMMSCRNIDLGTSVLDHSCSSSSTSRRFLFGNSSKTVCMIGGRSCVGNLVFLRRDLATCR). Positions 137, 140, and 175 each coordinate isopentenyl diphosphate. 2 residues coordinate Mg(2+): Asp-182 and Asp-186. Arg-191 is an an all-trans-polyprenyl diphosphate binding site. Arg-192 is an isopentenyl diphosphate binding site. Lys-268, Thr-269, Gln-306, and Lys-323 together coordinate an all-trans-polyprenyl diphosphate.

Belongs to the FPP/GGPP synthase family. Homodimer. Interacts with FBN5. Mg(2+) is required as a cofactor. As to expression, higher expression in leaves than in roots.

Its subcellular location is the plastid. It localises to the chloroplast. It catalyses the reaction 5 isopentenyl diphosphate + (2E,6E,10E)-geranylgeranyl diphosphate = all-trans-nonaprenyl diphosphate + 5 diphosphate. In terms of biological role, involved in providing solanesyl diphosphate for plastoquinone-9 (PQ-9) formation in plastids. Catalyzes the elongation of the prenyl side chain of PQ-9 in plastids. Contributes to the biosynthesis of plastochromanol-8 (PC-8) in plastids. Does not contribute to the synthesis of tocopherol or ubiquinone. PQ-9 and PC-8 are lipophilic antioxidants that act as protectant against photooxidative stress under high light stress conditions. Prefers geranylgeranyl diphosphate to farnesyl diphosphate as substrate. No activity with geranyl diphosphate or dimethylallyl diphosphate as substrate. In Arabidopsis thaliana (Mouse-ear cress), this protein is Solanesyl diphosphate synthase 2, chloroplastic.